Consider the following 125-residue polypeptide: Small ribosomal subunit protein uS13 (125 aa).

Belongs to the universal ribosomal protein uS13 family. Part of the 30S ribosomal subunit. Forms a loose heterodimer with protein S19. Forms two bridges to the 50S subunit in the 70S ribosome.

Its function is as follows. Located at the top of the head of the 30S subunit, it contacts several helices of the 16S rRNA. In the 70S ribosome it contacts the 23S rRNA (bridge B1a) and protein L5 of the 50S subunit (bridge B1b), connecting the 2 subunits; these bridges are implicated in subunit movement. Contacts the tRNAs in the A and P-sites. The sequence is that of Small ribosomal subunit protein uS13 from Rickettsia africae (strain ESF-5).